The chain runs to 126 residues: Flagellar protein FliT (126 aa).

A required for homodimerization region spans residues 1–50 (MASPHRLLKDYQQLLSLSQKILHLAVNGQWDTLVEQEIVYVQSVEGLVNT). A fliD binding region spans residues 60–98 (MRLHLRQILQEVMDNEAKVKQLLQKRMDELSSLMGQSLK).

Belongs to the FliT family. In terms of assembly, homodimer. Interacts with FliD and FlhC.

The protein localises to the cytoplasm. It is found in the cytosol. Its function is as follows. Dual-function protein that regulates the transcription of class 2 flagellar operons and that also acts as an export chaperone for the filament-capping protein FliD. As a transcriptional regulator, acts as an anti-FlhDC factor; it directly binds FlhC, thus inhibiting the binding of the FlhC/FlhD complex to class 2 promoters, resulting in decreased expression of class 2 flagellar operons. As a chaperone, effects FliD transition to the membrane by preventing its premature polymerization, and by directing it to the export apparatus. The chain is Flagellar protein FliT from Pectobacterium carotovorum subsp. carotovorum (strain PC1).